The sequence spans 20 residues: Peroxidase 1 (20 aa).

Residue His-14 participates in heme binding. Thr-15 is a binding site for Ca(2+).

Belongs to the peroxidase family. Classical plant (class III) peroxidase subfamily. It depends on Ca(2+) as a cofactor. Requires heme b as cofactor.

It localises to the secreted. The catalysed reaction is 2 a phenolic donor + H2O2 = 2 a phenolic radical donor + 2 H2O. Removal of H(2)O(2), oxidation of toxic reductants, biosynthesis and degradation of lignin, suberization, auxin catabolism, response to environmental stresses such as wounding, pathogen attack and oxidative stress. These functions might be dependent on each isozyme/isoform in each plant tissue. This chain is Peroxidase 1, found in Betula pendula (European white birch).